The following is a 277-amino-acid chain: Pantothenate synthetase (277 aa).

26 to 33 (MGNLHEGH) is a binding site for ATP. Histidine 33 serves as the catalytic Proton donor. (R)-pantoate is bound at residue glutamine 57. Glutamine 57 contributes to the beta-alanine binding site. ATP is bound at residue 144 to 147 (GKKD). Glutamine 150 provides a ligand contact to (R)-pantoate. Residues glycine 173 and 181–184 (LSSR) each bind ATP.

The protein belongs to the pantothenate synthetase family. In terms of assembly, homodimer.

It localises to the cytoplasm. The catalysed reaction is (R)-pantoate + beta-alanine + ATP = (R)-pantothenate + AMP + diphosphate + H(+). Its pathway is cofactor biosynthesis; (R)-pantothenate biosynthesis; (R)-pantothenate from (R)-pantoate and beta-alanine: step 1/1. Catalyzes the condensation of pantoate with beta-alanine in an ATP-dependent reaction via a pantoyl-adenylate intermediate. The protein is Pantothenate synthetase of Laribacter hongkongensis (strain HLHK9).